The sequence spans 387 residues: Radial spoke protein 14 (387 aa).

ARM repeat units follow at residues 24 to 67 (KALP…ELLS), 69 to 109 (PVNH…LLAA), 111 to 150 (EVGA…EAAR), 154 to 198 (TRRA…TCTQ), 204 to 244 (GILS…ALAT), 245 to 286 (REDA…AITI), 289 to 328 (EGKY…NVAE), and 330 to 370 (PEAR…QCRF).

The protein belongs to the flagellar radial spoke RSP14 family.

It localises to the cytoplasm. The protein localises to the cytoskeleton. The protein resides in the flagellum axoneme. The polypeptide is Radial spoke protein 14 (RSP14) (Chlamydomonas reinhardtii (Chlamydomonas smithii)).